A 683-amino-acid polypeptide reads, in one-letter code: THO complex subunit 5 (683 aa).

Residues 1–42 (MSSESSKKRKPKVIRSDGAPAEGKRNRSDTEQEGKYYSEEAE) are disordered. S2 bears the N-acetylserine mark. The segment at 2–144 (SSESSKKRKP…YEVMHLQKEI (143 aa)) is interaction with CSF1R. Positions 2 to 199 (SSESSKKRKP…RLDWELEQRK (198 aa)) are interaction with THOC7. Residues S5 and S6 each carry the phosphoserine modification. A Nuclear localization signal motif is present at residues 7-10 (KKRK). Positions 22 to 42 (EGKRNRSDTEQEGKYYSEEAE) are enriched in basic and acidic residues. The stretch at 81–247 (AIEIEERRIQ…QASLPVQEYL (167 aa)) forms a coiled coil. A Glycyl lysine isopeptide (Lys-Gly) (interchain with G-Cter in SUMO2) cross-link involves residue K153. Phosphotyrosine; by SRC is present on Y225. Residues 247 to 683 (LFMPFDQAHK…NHPQGFFSHR (437 aa)) are tandem RWD domains. A disordered region spans residues 301 to 336 (FKPPEDSQDDESDSDAEEEQTTKRRRPTLGVQLDDK). The span at 306-319 (DSQDDESDSDAEEE) shows a compositional bias: acidic residues. Phosphoserine occurs at positions 307, 312, and 314. Phosphothreonine is present on T328.

It belongs to the THOC5 family. As to quaternary structure, component of the THO subcomplex, which is composed of THOC1, THOC2, THOC3, THOC5, THOC6 and THOC7. The THO subcomplex interacts with DDX39B to form the THO-DDX39B complex which multimerizes into a 28-subunit tetrameric assembly. Component of the transcription/export (TREX) complex at least composed of ALYREF/THOC4, DDX39B, SARNP/CIP29, CHTOP and the THO subcomplex; in the complex interacts with THOC1, THOC2, THOC5, THOC6 and THOC7; forms a coiled-coil dimer with THOC7; together with THOC6 and THOC7, plays a key structural role in oligomerization of the THO-DDX39B complex. TREX seems to have a dynamic structure involving ATP-dependent remodeling. Interacts with phosphorylated CSF1R. Interacts (via N-terminus) with the NTF2 domain of NXF1. Forms a complex with CEBPB. Interacts with CPSF6; indicative for an association with the cleavage factor Im (CFIm) complex. Interacts with LUZP4. Interacts with NCBP3. In terms of processing, phosphorylated on tyrosine upon binding to activated CSF1R; which causes a dissociation of the two proteins. Phosphorylation on Ser-5 and/or Ser-6 is required for nuclear export. Phosphorylated on Thr-328 in insulin-stimulated adipocytes. Phosphorylation at Tyr-225 modulates mRNA binding. In terms of tissue distribution, ubiquitously expressed.

It is found in the nucleus. The protein localises to the cytoplasm. Its function is as follows. Component of the THO subcomplex of the TREX complex which is thought to couple mRNA transcription, processing and nuclear export, and which specifically associates with spliced mRNA and not with unspliced pre-mRNA. Plays a key structural role in the oligomerization of the THO-DDX39B complex. TREX is recruited to spliced mRNAs by a transcription-independent mechanism, binds to mRNA upstream of the exon-junction complex (EJC) and is recruited in a splicing- and cap-dependent manner to a region near the 5' end of the mRNA where it functions in mRNA export to the cytoplasm via the TAP/NXF1 pathway. THOC5 in conjunction with ALYREF/THOC4 functions in NXF1-NXT1 mediated nuclear export of HSP70 mRNA; both proteins enhance the RNA binding activity of NXF1 and are required for NXF1 localization to the nuclear rim. Involved in transcription elongation and genome stability. Involved in alternative polyadenylation site choice by recruiting CPSF6 to 5' region of target genes; probably mediates association of the TREX and CFIm complexes. Regulates the expression of myeloid transcription factors CEBPA, CEBPB and GAB2 by enhancing the levels of phosphatidylinositol 3,4,5-trisphosphate. May be involved in the differentiation of granulocytes and adipocytes. Essential for hematopoietic primitive cell survival and plays an integral role in monocytic development. In terms of biological role, (Microbial infection) The TREX complex is essential for the export of Kaposi's sarcoma-associated herpesvirus (KSHV) intronless mRNAs and infectious virus production. The polypeptide is THO complex subunit 5 (THOC5) (Homo sapiens (Human)).